The following is a 167-amino-acid chain: NADH-quinone oxidoreductase subunit B 2 (167 aa).

Residues C38, C39, C103, and C132 each contribute to the [4Fe-4S] cluster site.

It belongs to the complex I 20 kDa subunit family. As to quaternary structure, NDH-1 is composed of 14 different subunits. Subunits NuoB, C, D, E, F, and G constitute the peripheral sector of the complex. [4Fe-4S] cluster is required as a cofactor.

The protein resides in the cell inner membrane. The catalysed reaction is a quinone + NADH + 5 H(+)(in) = a quinol + NAD(+) + 4 H(+)(out). Its function is as follows. NDH-1 shuttles electrons from NADH, via FMN and iron-sulfur (Fe-S) centers, to quinones in the respiratory chain. The immediate electron acceptor for the enzyme in this species is believed to be ubiquinone. Couples the redox reaction to proton translocation (for every two electrons transferred, four hydrogen ions are translocated across the cytoplasmic membrane), and thus conserves the redox energy in a proton gradient. The polypeptide is NADH-quinone oxidoreductase subunit B 2 (Rhizobium etli (strain CIAT 652)).